Reading from the N-terminus, the 840-residue chain is Phosphatidylglycerol lysyltransferase (840 aa).

Residues 1-8 (MNQEVKNK) lie on the Cytoplasmic side of the membrane. The chain crosses the membrane as a helical span at residues 9 to 29 (IFSILKITFATALFIFVAITL). Residues 30-52 (YRELSGINFKDTLVEFSKINRMS) lie on the Extracellular side of the membrane. Residues 53 to 73 (LVLLFIGGGASLVILSMYDVI) traverse the membrane as a helical segment. At 74–89 (LSRALKMDISLGKVLR) the chain is on the cytoplasmic side. Residues 90–110 (VSYIINALNAIVGFGGFIGAG) form a helical membrane-spanning segment. At 111–128 (VRAMVYKNYTHDKKKLVH) the chain is on the extracellular side. A helical transmembrane segment spans residues 129-149 (FISLILISMLTGLSLLSLLIV). Residues 150-161 (FHVFDASLILDK) lie on the Cytoplasmic side of the membrane. The chain crosses the membrane as a helical span at residues 162 to 182 (ITWVRWVLYVVSFFLPLFIIY). Residues 183–200 (SMVRPPDKNNRFVGLYCT) are Extracellular-facing. Residues 201-221 (LVSCVEWLAAAVVLYFCGVIV) form a helical membrane-spanning segment. The Cytoplasmic segment spans residues 222-229 (DAHVSFMS). A helical transmembrane segment spans residues 230–250 (FIAIFIIAALSGLVSFIPGGF). Over 251 to 271 (GAFDLVVLLGFKTLGVPEEKV) the chain is Extracellular. A helical transmembrane segment spans residues 272 to 292 (LLMLLLYRFAYYFVPVIIALI). At 293–337 (LSSFEFGTSAKKYIEGSKYFIPAKDVTSFLMSYQKDIIAKIPSLS) the chain is on the cytoplasmic side. A helical transmembrane segment spans residues 338 to 358 (LAILVFFTSMIFFVNNLTIVY). At 359-369 (DALYDGNHLTY) the chain is on the extracellular side. Residues 370 to 390 (YILLAIHTSACLLLLLNVVGI) traverse the membrane as a helical segment. At 391 to 394 (YKQS) the chain is on the cytoplasmic side. The next 2 helical transmembrane spans lie at 395–415 (RRAIIFAMISILLITVATFFT) and 416–436 (YASYILITWLAIIFVLLIVAF). The Cytoplasmic portion of the chain corresponds to 437-450 (RRARRLKRPVRMRN). A helical membrane pass occupies residues 451–471 (IVAMLLFSLFILYVNHIFIAG). The Extracellular segment spans residues 472–489 (TLYALDIYTIEMHTSVLR). The helical transmembrane segment at 490-510 (YYFWLTILIIAIIIGMIAWLF) threads the bilayer. The Cytoplasmic segment spans residues 511 to 840 (DYQFSKVRIS…SKVMRVIRHK (330 aa)).

Belongs to the LPG synthase family.

The protein resides in the cell membrane. The catalysed reaction is L-lysyl-tRNA(Lys) + a 1,2-diacyl-sn-glycero-3-phospho-(1'-sn-glycerol) = a 1,2-diacyl-sn-glycero-3-phospho-1'-(3'-O-L-lysyl)-sn-glycerol + tRNA(Lys). In terms of biological role, catalyzes the transfer of a lysyl group from L-lysyl-tRNA(Lys) to membrane-bound phosphatidylglycerol (PG), which produces lysylphosphatidylglycerol (LPG), a major component of the bacterial membrane with a positive net charge. LPG synthesis contributes to bacterial virulence as it is involved in the resistance mechanism against cationic antimicrobial peptides (CAMP) produces by the host's immune system (defensins, cathelicidins) and by the competing microorganisms (bacteriocins). In fact, the modification of anionic phosphatidylglycerol with positively charged L-lysine results in repulsion of the peptides. This chain is Phosphatidylglycerol lysyltransferase (mprF), found in Staphylococcus aureus (strain COL).